The following is a 349-amino-acid chain: UDP-N-acetylenolpyruvoylglucosamine reductase (349 aa).

The region spanning Gly25–Arg197 is the FAD-binding PCMH-type domain. The active site involves Arg173. Ser249 functions as the Proton donor in the catalytic mechanism. Residue Glu345 is part of the active site.

The protein belongs to the MurB family. The cofactor is FAD.

The protein localises to the cytoplasm. It carries out the reaction UDP-N-acetyl-alpha-D-muramate + NADP(+) = UDP-N-acetyl-3-O-(1-carboxyvinyl)-alpha-D-glucosamine + NADPH + H(+). The protein operates within cell wall biogenesis; peptidoglycan biosynthesis. In terms of biological role, cell wall formation. The polypeptide is UDP-N-acetylenolpyruvoylglucosamine reductase (Burkholderia multivorans (strain ATCC 17616 / 249)).